The chain runs to 307 residues: Methionyl-tRNA formyltransferase (307 aa).

108–111 (SLLP) is a (6S)-5,6,7,8-tetrahydrofolate binding site.

Belongs to the Fmt family.

The catalysed reaction is L-methionyl-tRNA(fMet) + (6R)-10-formyltetrahydrofolate = N-formyl-L-methionyl-tRNA(fMet) + (6S)-5,6,7,8-tetrahydrofolate + H(+). Functionally, attaches a formyl group to the free amino group of methionyl-tRNA(fMet). The formyl group appears to play a dual role in the initiator identity of N-formylmethionyl-tRNA by promoting its recognition by IF2 and preventing the misappropriation of this tRNA by the elongation apparatus. This chain is Methionyl-tRNA formyltransferase, found in Stenotrophomonas maltophilia (strain K279a).